The sequence spans 564 residues: Protein NRT1/ PTR FAMILY 5.16 (564 aa).

A run of 2 helical transmembrane segments spans residues 49–69 (FAYFGIGSNLITYLTGPLGQS) and 80–100 (WSGTASILPVLGAFIADAYLG). Thr-104 is modified (phosphothreonine). 10 helical membrane passes run 110–130 (LIYILGLGLLTLSSILILMGL), 145–165 (FFWVNILFFCSLYLVAIGQGG), 192–212 (FFNWWFLSLSAGITLSIIVVV), 220–240 (WALGFGIPCLFMVMALALFLF), 327–347 (IPIWITSVVSTIPYAQYATFF), 358–378 (ILPGFEIPPASFQALIGLSIF), 408–428 (IGAGMVLSSLNMVVAALVEMK), 450–470 (IWWFVPQYLLLGMIDVFSLVG), 486–506 (IGLALSLSAMGLASFLSGFLI), and 533–553 (YFYWLLAAFTAIGFLAFLLLS).

The protein belongs to the major facilitator superfamily. Proton-dependent oligopeptide transporter (POT/PTR) (TC 2.A.17) family. As to expression, expressed in shoots and roots.

It localises to the membrane. This Arabidopsis thaliana (Mouse-ear cress) protein is Protein NRT1/ PTR FAMILY 5.16 (NPF5.16).